The primary structure comprises 500 residues: MSDLKTESQDLQQEENTLIALRKEKLAAEREKGQAFPNDFRRDSYCNDLQKQYVDKTKEELEAAAIPVKVAGRIMLNRGSFMVIQDMTGRIQVYVNRKTLPEETLAAVKTWDLGDIIAAEGTLARSGKGDLYVEMTNVRLLTKSLRPLPDKHHGLTDTEQRYRQRYVDLMVNEETRHTFRVRSQVISHIRKFLIDRDFLEVETPMLQTIPGGAAAKPFETHHNALDMAMFLRIAPELYLKRLVVGGFEKVFEINRNFRNEGVSTRHNPEFTMLEFYQAYADYRDNMDLTEELFRELAQLVLGSTDVPYGDKVFHFGEPFVRLSVFDSILKYNPELTAADLQDVDRARDIAKKAGAKVLGHEGLGKLQVMIFEELVEHKLEQPHFITEYPFEVSPLARRNDDNPAVTDRFELFIGGREIANAYSELNDAEDQAERFLAQVAEKDAGDDEAMHYDADFVRALEYGMPPTAGEGIGIDRLVMLLTNSPSIRDVILFPHMRPQA.

Residues Glu-410 and Glu-417 each contribute to the Mg(2+) site.

Belongs to the class-II aminoacyl-tRNA synthetase family. In terms of assembly, homodimer. Requires Mg(2+) as cofactor.

The protein resides in the cytoplasm. It catalyses the reaction tRNA(Lys) + L-lysine + ATP = L-lysyl-tRNA(Lys) + AMP + diphosphate. This chain is Lysine--tRNA ligase, found in Pseudomonas putida (strain W619).